The following is a 291-amino-acid chain: Transcription factor TYE7 (291 aa).

Positions 89-109 (FPTDQFFSNPSSYSHSPEVSS) are disordered. The span at 96-109 (SNPSSYSHSPEVSS) shows a compositional bias: low complexity. Serine 104 carries the phosphoserine modification. The bHLH domain occupies 180 to 265 (FQKQAHNKIE…EKAVDYILYL (86 aa)). Residues histidine 185, glutamate 189, and arginine 193 each contribute to the DNA site. Positions 221 to 245 (DSVKKQDEDGAETAATTPLPSAAAT) are disordered. Residues 233–245 (TAATTPLPSAAAT) show a composition bias toward low complexity. Threonine 237 carries the post-translational modification Phosphothreonine.

Homodimer. Efficient DNA binding requires dimerization with another bHLH protein.

The protein localises to the nucleus. Its function is as follows. Transcriptional activator of glycolytic gene expression, such as enolase genes (ENO1 and ENO2), glyceraldehyde-3-phosphate dehydrogenase gene (TDH), phosphoglycerate kinase (PGK1), phosphoglycerate mutase (PGM1), pyruvate kinase (PYK1) and triosephosphate isomerase (TPI1) genes. Binds DNA on E-box motifs: 5'-CANNTG-3'. In response to adenylic nucleotide reduction, activates Ty1 mRNA transcription, possibly by controlling Ty1 antisense transcription. Acts as a cell cycle transcription factor. Its function may also be linked to sulfur metabolism and the cross-regulation between phosphate and sulfate metabolism. The sequence is that of Transcription factor TYE7 from Saccharomyces cerevisiae (strain ATCC 204508 / S288c) (Baker's yeast).